The sequence spans 719 residues: Calpain-12 (719 aa).

One can recognise a Calpain catalytic domain in the interval leucine 45–serine 341. Active-site residues include cysteine 105, histidine 259, and asparagine 283. Residues proline 342–serine 540 form a domain III region. Residues aspartate 393 to glycine 402 show a composition bias toward acidic residues. The segment at aspartate 393–glycine 418 is disordered. Residues leucine 541 to serine 719 form a domain IV region. One can recognise an EF-hand domain in the interval glycine 620 to histidine 655. Ca(2+) is bound by residues aspartate 633, aspartate 635, serine 637, threonine 639, and glutamate 644.

This sequence belongs to the peptidase C2 family.

Functionally, calcium-regulated non-lysosomal thiol-protease. The polypeptide is Calpain-12 (CAPN12) (Homo sapiens (Human)).